The primary structure comprises 218 residues: Elongation factor Ts (218 aa).

The interval 82-85 (TDFV) is involved in Mg(2+) ion dislocation from EF-Tu.

The protein belongs to the EF-Ts family.

It localises to the cytoplasm. Functionally, associates with the EF-Tu.GDP complex and induces the exchange of GDP to GTP. It remains bound to the aminoacyl-tRNA.EF-Tu.GTP complex up to the GTP hydrolysis stage on the ribosome. This Prochlorococcus marinus (strain NATL2A) protein is Elongation factor Ts.